We begin with the raw amino-acid sequence, 333 residues long: Holliday junction branch migration complex subunit RuvB (333 aa).

A large ATPase domain (RuvB-L) region spans residues 1–182 (MDERLLSGES…FGVLSRLEYY (182 aa)). ATP contacts are provided by residues Leu-21, Arg-22, Gly-63, Lys-66, Thr-67, Thr-68, 129 to 131 (EDF), Arg-172, Tyr-182, and Arg-219. Thr-67 serves as a coordination point for Mg(2+). Positions 183–253 (TVDQLSAIVE…ITQMALELLQ (71 aa)) are small ATPAse domain (RuvB-S). A head domain (RuvB-H) region spans residues 256 to 333 (KLGLDHIDHK…EHFGMEMPKV (78 aa)). DNA-binding residues include Arg-311 and Arg-316.

Belongs to the RuvB family. In terms of assembly, homohexamer. Forms an RuvA(8)-RuvB(12)-Holliday junction (HJ) complex. HJ DNA is sandwiched between 2 RuvA tetramers; dsDNA enters through RuvA and exits via RuvB. An RuvB hexamer assembles on each DNA strand where it exits the tetramer. Each RuvB hexamer is contacted by two RuvA subunits (via domain III) on 2 adjacent RuvB subunits; this complex drives branch migration. In the full resolvosome a probable DNA-RuvA(4)-RuvB(12)-RuvC(2) complex forms which resolves the HJ.

The protein localises to the cytoplasm. The catalysed reaction is ATP + H2O = ADP + phosphate + H(+). The RuvA-RuvB-RuvC complex processes Holliday junction (HJ) DNA during genetic recombination and DNA repair, while the RuvA-RuvB complex plays an important role in the rescue of blocked DNA replication forks via replication fork reversal (RFR). RuvA specifically binds to HJ cruciform DNA, conferring on it an open structure. The RuvB hexamer acts as an ATP-dependent pump, pulling dsDNA into and through the RuvAB complex. RuvB forms 2 homohexamers on either side of HJ DNA bound by 1 or 2 RuvA tetramers; 4 subunits per hexamer contact DNA at a time. Coordinated motions by a converter formed by DNA-disengaged RuvB subunits stimulates ATP hydrolysis and nucleotide exchange. Immobilization of the converter enables RuvB to convert the ATP-contained energy into a lever motion, pulling 2 nucleotides of DNA out of the RuvA tetramer per ATP hydrolyzed, thus driving DNA branch migration. The RuvB motors rotate together with the DNA substrate, which together with the progressing nucleotide cycle form the mechanistic basis for DNA recombination by continuous HJ branch migration. Branch migration allows RuvC to scan DNA until it finds its consensus sequence, where it cleaves and resolves cruciform DNA. The sequence is that of Holliday junction branch migration complex subunit RuvB from Bacillus cereus (strain 03BB102).